The following is a 635-amino-acid chain: Biosynthetic arginine decarboxylase (635 aa).

Lys100 is subject to N6-(pyridoxal phosphate)lysine. Val282–Tyr292 contributes to the substrate binding site.

This sequence belongs to the Orn/Lys/Arg decarboxylase class-II family. SpeA subfamily. Mg(2+) serves as cofactor. Pyridoxal 5'-phosphate is required as a cofactor.

The enzyme catalyses L-arginine + H(+) = agmatine + CO2. It participates in amine and polyamine biosynthesis; agmatine biosynthesis; agmatine from L-arginine: step 1/1. Catalyzes the biosynthesis of agmatine from arginine. This chain is Biosynthetic arginine decarboxylase, found in Geobacter metallireducens (strain ATCC 53774 / DSM 7210 / GS-15).